Reading from the N-terminus, the 172-residue chain is Shikimate kinase (172 aa).

Residue glycine 11–threonine 16 coordinates ATP. Serine 15 is a binding site for Mg(2+). Substrate-binding residues include aspartate 33, arginine 57, and glycine 79. Residue arginine 117 participates in ATP binding. Arginine 136 is a substrate binding site. Arginine 153 contacts ATP.

Belongs to the shikimate kinase family. In terms of assembly, monomer. Requires Mg(2+) as cofactor.

Its subcellular location is the cytoplasm. It carries out the reaction shikimate + ATP = 3-phosphoshikimate + ADP + H(+). Its pathway is metabolic intermediate biosynthesis; chorismate biosynthesis; chorismate from D-erythrose 4-phosphate and phosphoenolpyruvate: step 5/7. Catalyzes the specific phosphorylation of the 3-hydroxyl group of shikimic acid using ATP as a cosubstrate. This Pseudomonas syringae pv. syringae (strain B728a) protein is Shikimate kinase.